A 108-amino-acid chain; its full sequence is Large ribosomal subunit protein eL36x (108 aa).

2 disordered regions span residues 13-34 (GHVVTKREQPPRPNNRKGKTSK) and 75-108 (KLGTHKRAKRKREEMSSVLRKMRSGGAGASEKKK). A compositionally biased stretch (basic residues) spans 75 to 84 (KLGTHKRAKR).

It belongs to the eukaryotic ribosomal protein eL36 family.

This Arabidopsis thaliana (Mouse-ear cress) protein is Large ribosomal subunit protein eL36x (RPL36C).